We begin with the raw amino-acid sequence, 369 residues long: Cell division protein FtsZ (369 aa).

GTP contacts are provided by residues 27–31 (GAGNN), 119–121 (GTG), Glu-150, and Asn-189.

The protein belongs to the FtsZ family. In terms of assembly, homodimer. Polymerizes to form a dynamic ring structure in a strictly GTP-dependent manner. Interacts directly with several other division proteins.

Its subcellular location is the cytoplasm. Its function is as follows. Essential cell division protein that forms a contractile ring structure (Z ring) at the future cell division site. The regulation of the ring assembly controls the timing and the location of cell division. One of the functions of the FtsZ ring is to recruit other cell division proteins to the septum to produce a new cell wall between the dividing cells. Binds GTP and shows GTPase activity. The protein is Cell division protein FtsZ of Mycoplasma genitalium (strain ATCC 33530 / DSM 19775 / NCTC 10195 / G37) (Mycoplasmoides genitalium).